Reading from the N-terminus, the 255-residue chain is Putative cysteine-rich repeat secretory protein 32 (255 aa).

A signal peptide spans M1 to S28. Gnk2-homologous domains are found at residues Y35–S136 and Y143–F252.

Belongs to the cysteine-rich repeat secretory protein family.

It is found in the secreted. This chain is Putative cysteine-rich repeat secretory protein 32 (CRRSP32), found in Arabidopsis thaliana (Mouse-ear cress).